Reading from the N-terminus, the 393-residue chain is Isocitrate dehydrogenase [NADP] (393 aa).

Ser102, Asn104, Arg108, Arg118, and Arg142 together coordinate D-threo-isocitrate. Asp283 lines the Mg(2+) pocket.

It belongs to the isocitrate and isopropylmalate dehydrogenases family. As to quaternary structure, homodimer. It depends on Mg(2+) as a cofactor. Requires Mn(2+) as cofactor.

The enzyme catalyses D-threo-isocitrate + NADP(+) = 2-oxoglutarate + CO2 + NADPH. Functionally, catalyzes the oxidative decarboxylation of isocitrate to 2-oxoglutarate and carbon dioxide with the concomitant reduction of NADP(+). The polypeptide is Isocitrate dehydrogenase [NADP] (icd) (Streptococcus mutans serotype c (strain ATCC 700610 / UA159)).